We begin with the raw amino-acid sequence, 882 residues long: Holliday junction resolvase MOC1, chloroplastic (882 aa).

Disordered stretches follow at residues 87-148 (IRDG…QTPT) and 323-351 (TPAAASQTPPTTVTSCGTGSGAPATPRAA). Polar residues predominate over residues 91–111 (PNSNSRCSTVRTHATRSKSTG). The segment covering 112-125 (PSRATSSGPATAAP) has biased composition (low complexity). Positions 134-148 (NDTQDGGLTSEQTPT) are enriched in polar residues. The segment covering 323–337 (TPAAASQTPPTTVTS) has biased composition (low complexity). Mg(2+) is bound by residues D397, E552, N629, and D634. A disordered region spans residues 710-882 (KVERKAQARS…DGGVSGSESE (173 aa)). Over residues 732–743 (EEPEAQAEEEQA) the composition is skewed to acidic residues. Low complexity-rich tracts occupy residues 744-758 (EAGTGVVAAAAGAAA), 769-783 (VESGSEAAVAEVAAG), 810-819 (SGKSSSKAEA), and 830-844 (ASVGSSSVGSSSVGS). 2 stretches are compositionally biased toward gly residues: residues 845 to 857 (SSGGGGGGGGGVK) and 868 to 882 (AKAGSDGGVSGSESE).

Mg(2+) is required as a cofactor. Mn(2+) serves as cofactor.

It localises to the plastid. The protein localises to the chloroplast. The catalysed reaction is Endonucleolytic cleavage at a junction such as a reciprocal single-stranded crossover between two homologous DNA duplexes (Holliday junction).. Functionally, a structure-specific endonuclease that resolves Holliday junction (HJ) intermediates during genetic recombination. Cleaves 4-way DNA junctions introducing paired nicks in opposing strands, leaving a 5'-terminal phosphate and a 3'-terminal hydroxyl group that are ligated to produce recombinant products. Mediates chloroplast nucleoid segregation during chloroplast division. The protein is Holliday junction resolvase MOC1, chloroplastic of Chlamydomonas reinhardtii (Chlamydomonas smithii).